The following is a 392-amino-acid chain: Phosphoglycerate kinase (392 aa).

Residues 21–23 (DFN), R36, 59–62 (HLGR), R113, and R146 each bind substrate. Residues K197, E319, and 345–348 (GGDT) contribute to the ATP site.

This sequence belongs to the phosphoglycerate kinase family. As to quaternary structure, monomer.

The protein localises to the cytoplasm. The catalysed reaction is (2R)-3-phosphoglycerate + ATP = (2R)-3-phospho-glyceroyl phosphate + ADP. It functions in the pathway carbohydrate degradation; glycolysis; pyruvate from D-glyceraldehyde 3-phosphate: step 2/5. This is Phosphoglycerate kinase from Francisella tularensis subsp. novicida (strain U112).